The sequence spans 314 residues: Olfactory receptor 5D13 (314 aa).

Residues 1-27 (MMASERNQSSTPTFILLGFSEYPEIQV) lie on the Extracellular side of the membrane. A glycan (N-linked (GlcNAc...) asparagine) is linked at Asn-7. A helical transmembrane segment spans residues 28-48 (PLFLVFLFVYTVTVVGNLGMI). Residues 49–56 (IIIRLNSK) are Cytoplasmic-facing. A helical membrane pass occupies residues 57–77 (LHTIMCFFLSHLSLTDFCFST). The Extracellular segment spans residues 78 to 101 (VVTPKLLENLVVEYRTISFSGCIM). The helical transmembrane segment at 102-122 (QFCFACIFGVTETFMLAAMAY) threads the bilayer. Over 123–141 (DRFVAVCKPLLYTTIMSQK) the chain is Cytoplasmic. The chain crosses the membrane as a helical span at residues 142–162 (LCALLVAGSYTWGIVCSLILT). Residues 163–198 (YFLLDLSFCESTFINNFICDHSVIVSASYSDPYISQ) lie on the Extracellular side of the membrane. Residues 199–219 (RLCFIIAIFNEVSSLIIILTS) form a helical membrane-spanning segment. Over 220-239 (YMLIFTTIMKMRSASGRQKT) the chain is Cytoplasmic. Residues 240–260 (FSTCASHLTAITIFHGTILFL) form a helical membrane-spanning segment. Residues 261 to 273 (YCVPNPKTSSLIV) are Extracellular-facing. Residues 274–294 (TVASVFYTVAIPMLNPLIYSL) traverse the membrane as a helical segment. Topologically, residues 295-314 (RNKDINNMFEKLVVTKLIYH) are cytoplasmic.

Belongs to the G-protein coupled receptor 1 family.

The protein localises to the cell membrane. Functionally, odorant receptor. In Homo sapiens (Human), this protein is Olfactory receptor 5D13 (OR5D13).